Reading from the N-terminus, the 435-residue chain is Serine--tRNA ligase (435 aa).

242–244 contacts L-serine; that stretch reads TAE. 273–275 serves as a coordination point for ATP; the sequence is RSE. E296 contributes to the L-serine binding site. 360 to 363 provides a ligand contact to ATP; the sequence is EISS. An L-serine-binding site is contributed by S396.

This sequence belongs to the class-II aminoacyl-tRNA synthetase family. Type-1 seryl-tRNA synthetase subfamily. As to quaternary structure, homodimer. The tRNA molecule binds across the dimer.

The protein localises to the cytoplasm. The enzyme catalyses tRNA(Ser) + L-serine + ATP = L-seryl-tRNA(Ser) + AMP + diphosphate + H(+). The catalysed reaction is tRNA(Sec) + L-serine + ATP = L-seryl-tRNA(Sec) + AMP + diphosphate + H(+). The protein operates within aminoacyl-tRNA biosynthesis; selenocysteinyl-tRNA(Sec) biosynthesis; L-seryl-tRNA(Sec) from L-serine and tRNA(Sec): step 1/1. Catalyzes the attachment of serine to tRNA(Ser). Is also able to aminoacylate tRNA(Sec) with serine, to form the misacylated tRNA L-seryl-tRNA(Sec), which will be further converted into selenocysteinyl-tRNA(Sec). This chain is Serine--tRNA ligase, found in Vibrio parahaemolyticus serotype O3:K6 (strain RIMD 2210633).